The primary structure comprises 544 residues: Secreted aspartic protease 9 (544 aa).

A signal peptide spans 1-17 (MRLNSVALLSLVATALA). A disordered region spans residues 31–50 (GESKDDLSPEDDSNPRFVKR). Residues 65-479 (YMATLKIGSN…DLDDYEVSLA (415 aa)) form the Peptidase A1 domain. Asp83 is an active-site residue. Residue 83–85 (DTG) participates in pepstatin A binding. Cys98 and Cys195 are oxidised to a cystine. N-linked (GlcNAc...) asparagine glycans are attached at residues Asn212, Asn240, and Asn252. Asp371 is a catalytic residue. Residue 371-375 (DTGST) participates in pepstatin A binding. A disulfide bridge connects residues Cys406 and Cys441. N-linked (GlcNAc...) asparagine glycosylation is found at Asn422 and Asn499. A disordered region spans residues 500–519 (SSGSGTTSSSGTSTSTSTRH). Residue Ser520 is the site of GPI-anchor amidated serine attachment. The propeptide at 521 to 544 (AGSIISKPVYGLLLSLLISCYVLV) is removed in mature form. The chain crosses the membrane as a helical span at residues 524–544 (IISKPVYGLLLSLLISCYVLV).

The protein belongs to the peptidase A1 family. In terms of assembly, monomer. In terms of processing, the GPI-anchor is attached to the protein in the endoplasmic reticulum and serves to target the protein to the cell surface. There, the glucosamine-inositol phospholipid moiety is cleaved off and the GPI-modified mannoprotein is covalently attached via its lipidless GPI glycan remnant to the 1,6-beta-glucan of the outer cell wall layer.

The protein resides in the cell membrane. The protein localises to the secreted. Its subcellular location is the cell wall. It catalyses the reaction Preferential cleavage at the carboxyl of hydrophobic amino acids, but fails to cleave 15-Leu-|-Tyr-16, 16-Tyr-|-Leu-17 and 24-Phe-|-Phe-25 of insulin B chain. Activates trypsinogen, and degrades keratin.. In terms of biological role, secreted aspartic peptidases (SAPs) are a group of ten acidic hydrolases considered as key virulence factors. These enzymes supply the fungus with nutrient amino acids as well as are able to degrade the selected host's proteins involved in the immune defense. Moreover, acts toward human hemoglobin though limited proteolysis to generate a variety of antimicrobial hemocidins, enabling to compete with the other microorganisms of the same physiological niche using the microbicidal peptides generated from the host protein. Functionally, plays a key role in defense against host by cleaving histatin-5 (Hst 5), a peptide from human saliva that carries out fungicidal activity. The cleavage rate decreases in an order of SAP2 &gt; SAP9 &gt; SAP3 &gt; SAP7 &gt; SAP4 &gt; SAP1 &gt; SAP8. The first cleavage occurs between residues 'Lys-17' and 'His-18' of Hst 5, giving DSHAKRHHGYKRKFHEK and HHSHRGY peptides. Simultaneously, the DSHAKRHHGYKRK peptide is also formed. Further fragmentation by SAP9 results in FHEK product. In Candida albicans (strain SC5314 / ATCC MYA-2876) (Yeast), this protein is Secreted aspartic protease 9.